We begin with the raw amino-acid sequence, 482 residues long: UDP-N-acetylmuramate--L-alanine ligase (482 aa).

119–125 (GTHGKTT) provides a ligand contact to ATP.

It belongs to the MurCDEF family.

It localises to the cytoplasm. The enzyme catalyses UDP-N-acetyl-alpha-D-muramate + L-alanine + ATP = UDP-N-acetyl-alpha-D-muramoyl-L-alanine + ADP + phosphate + H(+). Its pathway is cell wall biogenesis; peptidoglycan biosynthesis. Cell wall formation. This chain is UDP-N-acetylmuramate--L-alanine ligase, found in Cyanothece sp. (strain PCC 7425 / ATCC 29141).